The chain runs to 271 residues: MDNEGIGLYPLHRCKTIHLVRHAQGIHNVAGEKDHSAYSSEDYFDAHLTPLGWQQVDNLRNHVRAAQLLNKVELVIVSPMLRTIQTAVGAFGGEEDTNGADATPLMVANAGSSDRPAISSLNSPPFLAVELCRETMGDHPCDRRRSVTEYKALFPAIDFSIIETDNDVLWKPSPRESLEEVAARGVEFIKWIWTRKEKEIAIVSHSGFLHGLLSSFGKDCCDDLKKELSIHLSNCELRSMVIVDRGNLGTDSAETTNYPGKVPEGLDNPSG.

Residue His-22 is the Tele-phosphohistidine intermediate of the active site. Residue Glu-134 is the Proton donor/acceptor of the active site. Residues 252-271 (SAETTNYPGKVPEGLDNPSG) form a disordered region.

Belongs to the phosphoglycerate mutase family. In terms of tissue distribution, expressed in the shoot apical meristem and meristematic zone of the root tips.

In terms of biological role, may play a role in carbohydrates metabolism. This is Phosphoglycerate mutase-like protein from Arabidopsis thaliana (Mouse-ear cress).